The chain runs to 93 residues: UPF0728 protein C10orf53 homolog (93 aa).

Belongs to the UPF0728 family.

This chain is UPF0728 protein C10orf53 homolog, found in Bos taurus (Bovine).